Consider the following 387-residue polypeptide: MTSTPTALSIAQDLLRCPSVTPADAGALDVLETLLKGAGFTVHRVTFSEPGTADIDNLYARIGNTSPHLCFAGHTDVVPPGDASAWTHGAFAGDVADGLLYGRGAVDMKGGIACAVAATLDYLAANGGQPKGSISFLITGDEEDVAVNGTVKLLQWAAERGEQFDHCIVGEPSNVETIGDTIKIGRRGSQSGVLIVDGVQGHVAYPHRAANPVPDIAKLITALNDEPLDHGSAQFQPSNLEFTSVDVGNPATNVIPAQARAKFNIRFNDHHTQETLKALVEHRLVAACGNRIRAHIEWLPSNADVFVTKPGAFTDLVGAAIAEVTRRTPELNTGGGTSDARFIAKYCQVVEFGLVGQTMHQIDERTPVSDLDKLTAIYRGVLERYFK.

H74 is a Zn(2+) binding site. D76 is an active-site residue. D107 serves as a coordination point for Zn(2+). E142 serves as the catalytic Proton acceptor. Positions 143, 171, and 360 each coordinate Zn(2+).

It belongs to the peptidase M20A family. DapE subfamily. As to quaternary structure, homodimer. Zn(2+) is required as a cofactor. Requires Co(2+) as cofactor.

The enzyme catalyses N-succinyl-(2S,6S)-2,6-diaminopimelate + H2O = (2S,6S)-2,6-diaminopimelate + succinate. The protein operates within amino-acid biosynthesis; L-lysine biosynthesis via DAP pathway; LL-2,6-diaminopimelate from (S)-tetrahydrodipicolinate (succinylase route): step 3/3. Functionally, catalyzes the hydrolysis of N-succinyl-L,L-diaminopimelic acid (SDAP), forming succinate and LL-2,6-diaminopimelate (DAP), an intermediate involved in the bacterial biosynthesis of lysine and meso-diaminopimelic acid, an essential component of bacterial cell walls. The sequence is that of Succinyl-diaminopimelate desuccinylase from Rhodopseudomonas palustris (strain ATCC BAA-98 / CGA009).